The primary structure comprises 283 residues: Pantothenate synthetase (283 aa).

30–37 (MGALHRGH) is an ATP binding site. Residue histidine 37 is the Proton donor of the active site. A (R)-pantoate-binding site is contributed by glutamine 61. A beta-alanine-binding site is contributed by glutamine 61. 147–150 (GQKD) is a binding site for ATP. A (R)-pantoate-binding site is contributed by glutamine 153. ATP contacts are provided by residues isoleucine 176 and 184-187 (MSSR).

Belongs to the pantothenate synthetase family. In terms of assembly, homodimer.

The protein resides in the cytoplasm. It carries out the reaction (R)-pantoate + beta-alanine + ATP = (R)-pantothenate + AMP + diphosphate + H(+). Its pathway is cofactor biosynthesis; (R)-pantothenate biosynthesis; (R)-pantothenate from (R)-pantoate and beta-alanine: step 1/1. Its function is as follows. Catalyzes the condensation of pantoate with beta-alanine in an ATP-dependent reaction via a pantoyl-adenylate intermediate. The chain is Pantothenate synthetase from Cytophaga hutchinsonii (strain ATCC 33406 / DSM 1761 / CIP 103989 / NBRC 15051 / NCIMB 9469 / D465).